Here is a 316-residue protein sequence, read N- to C-terminus: Probable porphobilinogen deaminase (316 aa).

At C234 the chain carries S-(dipyrrolylmethanemethyl)cysteine.

Belongs to the HMBS family. It depends on dipyrromethane as a cofactor.

The enzyme catalyses 4 porphobilinogen + H2O = hydroxymethylbilane + 4 NH4(+). Its pathway is porphyrin-containing compound metabolism; protoporphyrin-IX biosynthesis; coproporphyrinogen-III from 5-aminolevulinate: step 2/4. Functionally, tetrapolymerization of the monopyrrole PBG into the hydroxymethylbilane pre-uroporphyrinogen in several discrete steps. In Methanosarcina mazei (strain ATCC BAA-159 / DSM 3647 / Goe1 / Go1 / JCM 11833 / OCM 88) (Methanosarcina frisia), this protein is Probable porphobilinogen deaminase.